Reading from the N-terminus, the 340-residue chain is S-adenosylmethionine:tRNA ribosyltransferase-isomerase (340 aa).

The protein belongs to the QueA family. In terms of assembly, monomer.

Its subcellular location is the cytoplasm. The catalysed reaction is 7-aminomethyl-7-carbaguanosine(34) in tRNA + S-adenosyl-L-methionine = epoxyqueuosine(34) in tRNA + adenine + L-methionine + 2 H(+). It functions in the pathway tRNA modification; tRNA-queuosine biosynthesis. Functionally, transfers and isomerizes the ribose moiety from AdoMet to the 7-aminomethyl group of 7-deazaguanine (preQ1-tRNA) to give epoxyqueuosine (oQ-tRNA). In Macrococcus caseolyticus (strain JCSC5402) (Macrococcoides caseolyticum), this protein is S-adenosylmethionine:tRNA ribosyltransferase-isomerase.